We begin with the raw amino-acid sequence, 311 residues long: Ribosomal RNA small subunit methyltransferase H (311 aa).

S-adenosyl-L-methionine is bound by residues 33 to 35 (AGH), Asp53, Phe80, Asp101, and Gln108.

It belongs to the methyltransferase superfamily. RsmH family.

It localises to the cytoplasm. It carries out the reaction cytidine(1402) in 16S rRNA + S-adenosyl-L-methionine = N(4)-methylcytidine(1402) in 16S rRNA + S-adenosyl-L-homocysteine + H(+). Functionally, specifically methylates the N4 position of cytidine in position 1402 (C1402) of 16S rRNA. This chain is Ribosomal RNA small subunit methyltransferase H, found in Geobacter sulfurreducens (strain ATCC 51573 / DSM 12127 / PCA).